The primary structure comprises 124 residues: Group 1 truncated hemoglobin GlbN (124 aa).

Positions 46, 70, and 117 each coordinate heme.

It belongs to the truncated hemoglobin family. Group I subfamily. In terms of assembly, monomer. Heme serves as cofactor.

Its function is as follows. Forms a very stable complex with oxygen. The oxygen dissociation rate is 0.011 sec(-1). The polypeptide is Group 1 truncated hemoglobin GlbN (glbN) (Synechocystis sp. (strain ATCC 27184 / PCC 6803 / Kazusa)).